A 1364-amino-acid chain; its full sequence is ABC-type transporter cns4 (1364 aa).

One can recognise an ABC transporter 1 domain in the interval 42-290 (SRVKESRAKP…MEEMGFLYTD (249 aa)). 2 N-linked (GlcNAc...) asparagine glycosylation sites follow: Asn152 and Asn214. 5 helical membrane-spanning segments follow: residues 435 to 455 (LFFAVLLNALLSMSEVTGSFA), 483 to 503 (IPLIAMQVTLFALPVYWMTGL), 508 to 528 (EAFLTYWIITISVTMCMTALF), 540 to 560 (AAIKVTGFLMSALIMYTGFLI), and 567 to 587 (PWLGWIFWINPLAYGYEAVLS). N-linked (GlcNAc...) asparagine glycosylation is present at Asn610. A helical transmembrane segment spans residues 650–670 (FAIVWVWWALFVILTVYFTSN). N-linked (GlcNAc...) asparagine glycans are attached at residues Asn689, Asn711, and Asn739. Positions 697–732 (DEEVGSGPDSHDSRNRSGISPIGDKQETSTDGPSKI) are disordered. In terms of domain architecture, ABC transporter 2 spans 737–985 (IRNTSVFTWK…TVNEYFGRNG (249 aa)). Position 779 to 786 (779 to 786 (GSSGAGKT)) interacts with ATP. Helical transmembrane passes span 1076–1094 (LMLHITSGLLNGFSFWKIG), 1105–1125 (FTIFNFIFVAPGVIAQLQPLF), 1146–1166 (AFATGLIVSELPYLVVCAVVY), 1185–1205 (AVFFVVLMYEFIYTGIGQAIA), 1211–1231 (AIFAVLINPLIIAILVFFCGV), and 1245–1265 (WLYYLDPFNYLMGSLLIFTTF).

This sequence belongs to the ABC transporter superfamily. ABCG family. PDR (TC 3.A.1.205) subfamily.

It localises to the cell membrane. In terms of biological role, ABC-type transporter; part of the gene cluster that mediates the biosynthesis of cordycepin (COR) and pentostatin (PTN), two adenosine analogs with related bioactivity profiles as both mimic adenosine and can inhibit some of the processes that are adenosine dependent. Mediates the pumping of pentostatin but not of cordycepin out of fungal cells. Decreasing intracellular pentostatin releases adenosine deaminase (ADA) inhibition, allowing ADA to deaminate cordycepin into non-toxic 3'-d. This Cordyceps militaris (strain CM01) (Caterpillar fungus) protein is ABC-type transporter cns4.